A 169-amino-acid chain; its full sequence is ATP synthase subunit b, sodium ion specific (169 aa).

A helical membrane pass occupies residues S5–L27.

This sequence belongs to the ATPase B chain family. In terms of assembly, F-type ATPases have 2 components, F(1) - the catalytic core - and F(0) - the membrane proton channel. F(1) has five subunits: alpha(3), beta(3), gamma(1), delta(1), epsilon(1). F(0) has three main subunits: a(1), b(2) and c(10-14). The alpha and beta chains form an alternating ring which encloses part of the gamma chain. F(1) is attached to F(0) by a central stalk formed by the gamma and epsilon chains, while a peripheral stalk is formed by the delta and b chains.

The protein localises to the cell membrane. F(1)F(0) ATP synthase produces ATP from ADP in the presence of a proton or sodium gradient. F-type ATPases consist of two structural domains, F(1) containing the extramembraneous catalytic core and F(0) containing the membrane proton channel, linked together by a central stalk and a peripheral stalk. During catalysis, ATP synthesis in the catalytic domain of F(1) is coupled via a rotary mechanism of the central stalk subunits to proton translocation. Its function is as follows. Component of the F(0) channel, it forms part of the peripheral stalk, linking F(1) to F(0). Functionally, in this organism this enzyme may function as an ATP-driven Na(+) ion pump to generate a Na(+) ion electrochemical gradient rather than as an ATP synthase. The chain is ATP synthase subunit b, sodium ion specific (atpF) from Clostridium paradoxum.